The sequence spans 304 residues: ULP1-interacting protein 4 (304 aa).

Positions 72–269 (DEYPKEVDEH…SIVKEGDANT (198 aa)) are disordered. The span at 73–83 (EYPKEVDEHSN) shows a compositional bias: basic and acidic residues. Over residues 129 to 149 (TPSLKGNVTFPSPKTAISQDG) the composition is skewed to polar residues. Ser-140 is subject to Phosphoserine. A compositionally biased stretch (basic and acidic residues) spans 155 to 183 (ETTRKERKYEHAPLNEVPVERDPKEENKE). Phosphoserine is present on residues Ser-185 and Ser-205.

In terms of assembly, interacts with ULP1.

It localises to the endoplasmic reticulum membrane. It is found in the mitochondrion outer membrane. Its subcellular location is the nucleus envelope. The polypeptide is ULP1-interacting protein 4 (UIP4) (Saccharomyces cerevisiae (strain ATCC 204508 / S288c) (Baker's yeast)).